The following is a 99-amino-acid chain: MNQERVFKVLLGPHVSEKATVLADKKGQFVFKVATDATKLEIKKAVESLFSVKVERVTTLNVLGKSKRTARGLGKRNDWKKAVISLQPGQDLDFSSSAE.

This sequence belongs to the universal ribosomal protein uL23 family. As to quaternary structure, part of the 50S ribosomal subunit. Contacts protein L29, and trigger factor when it is bound to the ribosome.

Its function is as follows. One of the early assembly proteins it binds 23S rRNA. One of the proteins that surrounds the polypeptide exit tunnel on the outside of the ribosome. Forms the main docking site for trigger factor binding to the ribosome. In Pseudomonas fluorescens (strain SBW25), this protein is Large ribosomal subunit protein uL23.